The primary structure comprises 571 residues: MTIEALADVVRLHPELALFAAIVFGHFIGKIEIRKVSLGTVVGTLIAGMILGLLFEPEIPDLLKWAFFDLFLFAVGYSAGPQFFASLKREALPQMALAVVVSCTGLAAAIAMVALFRFDPGLSAGLVSGSMTQSAALGSALSAIAAMDVDEATRALLTAHAPLADATTYIFGEVGLILFVTVVAPRLLKVDLRQVAREAEAELQARTDEDDAALWDQAPLSLRTYRLENAELDQRTVHEFERRYAAGRLTVTGIRRGDQLLRDVGADARLALGDIVLVASRRAGVVGAALEVGTEVDDQELLSEPMVRASIVLTRREMAGKTLGELARGAARGLFLDSLHRGESTLPRAMGTRVQRGDVFKLTGSRAAIATAARNLGFIEHDQGRTDLVYLAGGVVVGILFGLLQVRLTGVPLGLGTSGGVLVVGLVAGWLYSRYPVVGHIPEPALRLLSDVGLIVFIAAIGLAAGPHAVQAIHEGGIALFAKLVGAGVVVTLAGPIAGLLLGHYVLKLPPIALLPGIAGAQTTVATLNALKERGGSDVYAIGFTVPFAVSNVLITLWGPVIVACAVALSR.

5 consecutive transmembrane segments (helical) span residues 10 to 29, 36 to 55, 65 to 87, 96 to 118, and 166 to 188; these read VRLH…HFIG, VSLG…GLLF, WAFF…FASL, ALAV…LFRF, and ATTY…PRLL. The RCK C-terminal domain occupies 294–378; it reads TEVDDQELLS…IATAARNLGF (85 aa). Helical transmembrane passes span 388–406, 411–433, 446–465, 480–502, 509–531, and 546–568; these read LVYL…LLQV, VPLG…WLYS, LRLL…GLAA, LFAK…GLLL, LPPI…LNAL, and VPFA…CAVA.

It belongs to the AAE transporter (TC 2.A.81) family.

Its subcellular location is the cell membrane. This is an uncharacterized protein from Bordetella bronchiseptica (strain ATCC BAA-588 / NCTC 13252 / RB50) (Alcaligenes bronchisepticus).